The chain runs to 319 residues: Secreted effector protein sopD2 (319 aa).

The Required to target late endocytic compartments motif lies at 37–44 (WDRFKDCF).

The protein belongs to the SopD family.

It is found in the secreted. Its subcellular location is the host cell membrane. Effector proteins function to alter host cell physiology and promote bacterial survival in host tissues. Contributes to the formation of Salmonella-induced filaments (Sifs) in infected epithelial cells and to replication in macrophages. This Salmonella typhimurium (strain LT2 / SGSC1412 / ATCC 700720) protein is Secreted effector protein sopD2 (sopD2).